A 353-amino-acid polypeptide reads, in one-letter code: JmjC domain-containing protein E (353 aa).

The JmjC domain occupies 138–348 (YYIQYQNNSL…ETTKYQKQIK (211 aa)).

In Dictyostelium discoideum (Social amoeba), this protein is JmjC domain-containing protein E (jcdE).